Here is a 337-residue protein sequence, read N- to C-terminus: Inner membrane protein YhjD (337 aa).

A compositionally biased stretch (basic and acidic residues) spans 1-29 (MTQENEIKRPIQDLEHEPIKPLDNSEKGS). The tract at residues 1 to 31 (MTQENEIKRPIQDLEHEPIKPLDNSEKGSKV) is disordered. Residues 1–74 (MTQENEIKRP…LGNQFGAAIT (74 aa)) are Cytoplasmic-facing. A helical transmembrane segment spans residues 75-97 (YFSFLSMIPILMVSFAAGGFVLA). Topologically, residues 98–133 (SHPMLLQDIFDKILQNISDPTLAATLKNTINTAVQQ) are periplasmic. The helical transmembrane segment at 134 to 156 (RTTVGLVGLAVALYSGINWMGNL) threads the bilayer. Topologically, residues 157–185 (REAIRAQSRDVWERSPQDQEKFWVKYLRD) are cytoplasmic. The helical transmembrane segment at 186–208 (FISLIGLLIALIVTLSITSVAGS) threads the bilayer. Topologically, residues 209-227 (AQQMIISALHLNSIEWLKP) are periplasmic. Residues 228–250 (TWRLIGLAISIFANYLLFFWIFW) traverse the membrane as a helical segment. Topologically, residues 251–261 (RLPRHRPRKKA) are cytoplasmic. A helical membrane pass occupies residues 262 to 284 (LIRGTFLAAIGFEVIKIVMTYTL). Residues 285-298 (PSLMKSPSGAAFGS) lie on the Periplasmic side of the membrane. A helical membrane pass occupies residues 299–321 (VLGLMAFFYFFARLTLFCAAWIA). At 322–337 (TAEYKDDPRMPGKTQP) the chain is on the cytoplasmic side.

The protein localises to the cell inner membrane. This Escherichia coli (strain K12) protein is Inner membrane protein YhjD (yhjD).